The sequence spans 1371 residues: F-actin-uncapping protein LRRC16A (1371 aa).

Met1 bears the N-acetylmethionine mark. The residue at position 122 (Ser122) is a Phosphoserine. LRR repeat units follow at residues 245 to 269 (SNRL…LASA), 275 to 298 (NSGL…SLSI), 304 to 327 (PKGL…SLSQ), 336 to 363 (ASTL…FLAQ), 391 to 418 (LQYL…SFKQ), 423 to 447 (SLAL…LLLG), 481 to 506 (IHNI…VWLS), 543 to 566 (ESPL…IINA), 570 to 593 (NTSL…MLAK), and 654 to 678 (LQKI…AYRL). Positions 710-734 (GDAIQEDLKSAERLMRDAKNSKTLL) form a coiled coil. Position 916 is a phosphothreonine (Thr916). 3 disordered regions span residues 957–1000 (PFPS…QPTQ), 1036–1159 (KMDS…RRYG), and 1172–1371 (KAKQ…FIFV). The LRR 11 repeat unit spans residues 958 to 981 (FPSLRQEKRSSGFISELPSEEGKK). Residues 958-1082 (FPSLRQEKRS…LIKSRSKSER (125 aa)) form an inhibits capping activity of CAPZA2 region. At Ser968 the chain carries Phosphoserine. Composition is skewed to basic and acidic residues over residues 977–986 (EEGKKLEHFT) and 1036–1061 (KMDS…EKKK). Residues 1055–1089 (GGDEKKKRDSRKSSGFLNLIKSRSKSERPPTILMT) are necessary for localization at the cell membrane. Ser1067 and Ser1094 each carry phosphoserine. Composition is skewed to basic and acidic residues over residues 1106–1130 (CPRK…KTPD) and 1139–1148 (EIGKVERSDS). A compositionally biased stretch (polar residues) spans 1190 to 1199 (AVSQDSSSPA). Position 1228 is a phosphothreonine (Thr1228). A compositionally biased stretch (basic and acidic residues) spans 1231-1243 (KNTKAEPKAEAGS). Residues 1244 to 1265 (RSRSSSSTPTSPKPLLQSPKPS) show a composition bias toward low complexity. A phosphoserine mark is found at Ser1280, Ser1288, Ser1291, Ser1315, Ser1324, and Ser1331. Residues 1313 to 1326 (QSSPQPSPRTFSQE) show a composition bias toward polar residues. The segment covering 1340–1353 (QEQKQRSSSKDGHQ) has biased composition (basic and acidic residues). Ser1360 carries the post-translational modification Phosphoserine.

Belongs to the CARMIL family. In terms of assembly, homodimer. Interacts (via C-terminus) with heterodimer capping protein (CP); this interaction uncaps barbed ends capped by CP, enhances barbed-end actin polymerization and promotes lamellipodial formation and cell migration. Interacts with heterodimer capping protein (CP). Interacts with MYO1E. Interacts with TRIO. As to expression, expressed in lung, placenta, small intestine, liver, thymus, colon, skeletal muscle, heart and brain. Higher expression in kidney.

It localises to the cytoplasm. The protein localises to the cytoskeleton. It is found in the cell membrane. The protein resides in the cell projection. Its subcellular location is the lamellipodium. Cell membrane-cytoskeleton-associated protein that plays a role in the regulation of actin polymerization at the barbed end of actin filaments. Prevents F-actin heterodimeric capping protein (CP) activity at the leading edges of migrating cells, and hence generates uncapped barbed ends and enhances actin polymerization, however, seems unable to nucleate filaments. Plays a role in lamellipodial protrusion formations and cell migration. The sequence is that of F-actin-uncapping protein LRRC16A from Homo sapiens (Human).